A 479-amino-acid chain; its full sequence is BRAP2 RING ZnF UBP domain-containing protein 2 (479 aa).

The RING-type; atypical zinc finger occupies 167 to 207 (CPVCLERLDQDTGGILTTMCNHSFHCSCISNWPDSSCPVCR). A UBP-type; degenerate zinc finger spans residues 201 to 294 (SSCPVCRYCQ…GKLVELNSHG (94 aa)). C218, C221, C230, C233, C238, H245, H249, and H255 together coordinate Zn(2+). A coiled-coil region spans residues 328-442 (NELLQAQLEN…MAQMDGESEV (115 aa)). The segment at 434-479 (AQMDGESEVSETKEVQDATVSTTNTSSSGAGNVIHANKKKSNRRKG) is disordered. Low complexity predominate over residues 451–466 (ATVSTTNTSSSGAGNV). The span at 469–479 (ANKKKSNRRKG) shows a compositional bias: basic residues.

As to quaternary structure, component of the heteromeric E3 ligase complex made of BRIZ1 and BRIZ2. Forms heterooligomers with BRIZ1 via coiled-coil domains.

It carries out the reaction S-ubiquitinyl-[E2 ubiquitin-conjugating enzyme]-L-cysteine + [acceptor protein]-L-lysine = [E2 ubiquitin-conjugating enzyme]-L-cysteine + N(6)-ubiquitinyl-[acceptor protein]-L-lysine.. Its pathway is protein modification; protein ubiquitination. RING-type ubiquitin E3 ligase that binds ubiquitin and is required for seed germination and post-germination growth. The protein is BRAP2 RING ZnF UBP domain-containing protein 2 of Arabidopsis thaliana (Mouse-ear cress).